Reading from the N-terminus, the 562-residue chain is DNA ligase (562 aa).

Glu-252 serves as a coordination point for ATP. The N6-AMP-lysine intermediate role is filled by Lys-254. Residues Arg-259, Arg-274, Glu-303, Phe-343, Arg-419, and Lys-425 each coordinate ATP.

This sequence belongs to the ATP-dependent DNA ligase family. Mg(2+) serves as cofactor.

The catalysed reaction is ATP + (deoxyribonucleotide)n-3'-hydroxyl + 5'-phospho-(deoxyribonucleotide)m = (deoxyribonucleotide)n+m + AMP + diphosphate.. Its function is as follows. DNA ligase that seals nicks in double-stranded DNA during DNA replication, DNA recombination and DNA repair. The sequence is that of DNA ligase from Methanococcus aeolicus (strain ATCC BAA-1280 / DSM 17508 / OCM 812 / Nankai-3).